A 271-amino-acid polypeptide reads, in one-letter code: Metal-staphylopine import system ATP-binding protein CntD (271 aa).

The region spanning 6–251 (VKHLTITDTW…PEHVYTKYLL (246 aa)) is the ABC transporter domain. 38 to 45 (GESGSGKS) serves as a coordination point for ATP.

Belongs to the ABC transporter superfamily. The complex is composed of two ATP-binding proteins (CntD and CntF), two transmembrane proteins (CntB and CntC) and a solute-binding protein (CntA).

It localises to the cell membrane. Nickel/cobalt import is reduced in the presence of zinc. Its function is as follows. Part of the ABC transporter complex CntABCDF (Opp1) involved in the uptake of metal in complex with the metallophore staphylopine (StP). Involved in the import of divalent metals ions such as nickel, cobalt and zinc. Probably responsible for energy coupling to the transport system. Plays a major role in nickel/cobalt import in zinc-depleted conditions. Contributes to virulence. Required for full urease activity in vitro. The polypeptide is Metal-staphylopine import system ATP-binding protein CntD (Staphylococcus aureus (strain NCTC 8325 / PS 47)).